The chain runs to 289 residues: Nitrogenase iron protein (289 aa).

8-15 (GKGGIGKS) contacts ATP. Cys96 is a binding site for [4Fe-4S] cluster. Arg99 carries the ADP-ribosylarginine; by dinitrogenase reductase ADP-ribosyltransferase modification. Residue Cys130 coordinates [4Fe-4S] cluster.

Belongs to the NifH/BchL/ChlL family. As to quaternary structure, homodimer. [4Fe-4S] cluster is required as a cofactor. The reversible ADP-ribosylation of Arg-99 inactivates the nitrogenase reductase and regulates nitrogenase activity.

The catalysed reaction is N2 + 8 reduced [2Fe-2S]-[ferredoxin] + 16 ATP + 16 H2O = H2 + 8 oxidized [2Fe-2S]-[ferredoxin] + 2 NH4(+) + 16 ADP + 16 phosphate + 6 H(+). In terms of biological role, the key enzymatic reactions in nitrogen fixation are catalyzed by the nitrogenase complex, which has 2 components: the iron protein and the molybdenum-iron protein. The chain is Nitrogenase iron protein from Parafrankia sp. (strain EAN1pec).